Here is a 667-residue protein sequence, read N- to C-terminus: MIDRVDNNHFDLVSDYQPTGDQPQAIQQLTAGIESGEKEQILLGATGTGKTFTISNVIAKVNKPTLILSHNKTLAGQLYGEFKKFFPNNAVEYFVSYYDYYQPEAYVPSSDTYIEKDSAINDEIDKLRHSATSSLLERNDVIVVASVSSIFGLGDPHEYQDHVVSLRVGMEIDRNDLLRKLVDIQFDRNDIDFQRGRFRVHGDVVEIFPASRDDHALRVEFFGDEIDRIREIDALTGEIVADREHVAIFPATHFMTNDAIMEHAIKGIEDELDGRLKELTADGKLLEAQRLKQRTTYDVEMLKEMGYTSGIENYSRFMDGRKPGEPPYTLLDFFPKDFLLVVDESHVTMPQVRGMYNGDRARKQMLVDYGFRLPSALDNRPLKLEEVEQHINQVVYMSATPGPYEMDRTKHVVQQIIRPTGLLDPTIEVRPIMGQIDDLVGEINKRIEVNERVFITTLTKKMAEDLTDYFKDLGIKVRYLHSDIKTLERTQIIRDLRLGKFDVLVGINLLREGIDVPEVSLVAILDADKEGFLRNERSLIQTIGRAARNEHGSVIMYADTTTDSMQAAMDETARRRAVQMKYNEDHHITPHTIKKAIPELIASTKTTEDAGKKDDFLETDFDDMTREQQLDMISKLEEQMKTAAKKLDFEQAATLRDTVMELKAQIS.

In terms of domain architecture, Helicase ATP-binding spans 31-414 (AGIESGEKEQ…EMDRTKHVVQ (384 aa)). An ATP-binding site is contributed by 44–51 (GATGTGKT). Residues 97–120 (YYDYYQPEAYVPSSDTYIEKDSAI) carry the Beta-hairpin motif. The Helicase C-terminal domain maps to 435–597 (QIDDLVGEIN…ITPHTIKKAI (163 aa)). Positions 630–665 (LDMISKLEEQMKTAAKKLDFEQAATLRDTVMELKAQ) constitute a UVR domain.

Belongs to the UvrB family. In terms of assembly, forms a heterotetramer with UvrA during the search for lesions. Interacts with UvrC in an incision complex.

The protein resides in the cytoplasm. Functionally, the UvrABC repair system catalyzes the recognition and processing of DNA lesions. A damage recognition complex composed of 2 UvrA and 2 UvrB subunits scans DNA for abnormalities. Upon binding of the UvrA(2)B(2) complex to a putative damaged site, the DNA wraps around one UvrB monomer. DNA wrap is dependent on ATP binding by UvrB and probably causes local melting of the DNA helix, facilitating insertion of UvrB beta-hairpin between the DNA strands. Then UvrB probes one DNA strand for the presence of a lesion. If a lesion is found the UvrA subunits dissociate and the UvrB-DNA preincision complex is formed. This complex is subsequently bound by UvrC and the second UvrB is released. If no lesion is found, the DNA wraps around the other UvrB subunit that will check the other stand for damage. This is UvrABC system protein B from Lactiplantibacillus plantarum (strain ATCC BAA-793 / NCIMB 8826 / WCFS1) (Lactobacillus plantarum).